Consider the following 65-residue polypeptide: Large ribosomal subunit protein bL32 (65 aa).

This sequence belongs to the bacterial ribosomal protein bL32 family.

The sequence is that of Large ribosomal subunit protein bL32 from Tropheryma whipplei (strain TW08/27) (Whipple's bacillus).